Here is a 257-residue protein sequence, read N- to C-terminus: Ciliary microtubule associated protein 1B (257 aa).

3 STPGR repeats span residues 103–129 (PGPGSYSPENATKATYLSPPAFTLSAR), 182–207 (PGPGTYQVVDPCVYKHKGPQYSMTGR), and 218–243 (PGPGAHYPEMVCFTRAKAPSFSFGIR).

The protein belongs to the CIMAP family.

Its subcellular location is the cell projection. It is found in the cilium. The protein localises to the flagellum. This is Ciliary microtubule associated protein 1B (cimap1b) from Danio rerio (Zebrafish).